The primary structure comprises 216 residues: Probable calcium-binding protein CML35 (216 aa).

The interval threonine 18–serine 58 is disordered. A compositionally biased stretch (low complexity) spans serine 23–serine 44. EF-hand domains are found at residues aspartate 66–glutamate 101, proline 103–glutamate 138, valine 141–glutamate 176, and cysteine 178–aspartate 213. Ca(2+) contacts are provided by aspartate 79, aspartate 81, aspartate 83, and aspartate 90. Residues aspartate 154, aspartate 156, asparagine 158, lysine 160, glutamate 165, aspartate 191, asparagine 193, aspartate 195, and aspartate 202 each coordinate Ca(2+).

In terms of biological role, potential calcium sensor. This Arabidopsis thaliana (Mouse-ear cress) protein is Probable calcium-binding protein CML35 (CML35).